Here is a 467-residue protein sequence, read N- to C-terminus: MVPITSLAQTLERLRRKDYSCLELVETLIARCEAAKALNALLATDWGGLRRRAKKIDRHGNAGVGLRGIPLCFKANIATGIFPTTAATPALINHLPKIPSRIAERLFSAGALPGASGNMHELSFGITSNNYATGAVRNPWNPSLIPGGSSGGVAAAVASRLMLGGIGTDTGASVRLPAALCGVVGFRPTLGRYPRDRIIPVSPTRDTAGIIAQCVADVVILDQVISGRPARILPIPLKGLRIGLPTTYFYDDLDADVAFAAETTIRLLANRGVTFVEADIPHLEDLNSGASLPIALYEFPHALKQYLDDFVGTVSFSDVIKEIRSPDVANIVNAQIDGHQISNAEYELARQSFRPRLQAAYRNYFRLYRLDAILFPTAPLAAKAIGQDSSVIHNGSMVNTFKIYVRNVDPSSNAGLPGLSLPVGLTPDRLPVGMEIDGLAGSDHRLLAIGAALEKAINFRSFPDVLN.

Catalysis depends on charge relay system residues lysine 74 and serine 149. Serine 173 acts as the Acyl-ester intermediate in catalysis.

It belongs to the amidase family.

It participates in plant hormone metabolism; auxin biosynthesis. Its function is as follows. Hydrolyzes indole-3-acetamide (IAM) into indole-3-acetic acid (IAA). The chain is Indoleacetamide hydrolase (TA-iaaH) from Agrobacterium vitis (Rhizobium vitis).